The sequence spans 274 residues: Probable S-adenosylmethionine-dependent methyltransferase MT3114 (274 aa).

The disordered stretch occupies residues 1 to 24 (MCAFVPHVPRHSRGDNPPSASTAS).

Belongs to the methyltransferase superfamily.

In terms of biological role, probable S-adenosylmethionine-dependent methyltransferase required for the 6-O-methylation of the polysaccharide backbone of 6-O-methylglucosyl lipopolysaccharides (MGLP). The sequence is that of Probable S-adenosylmethionine-dependent methyltransferase MT3114 from Mycobacterium tuberculosis (strain CDC 1551 / Oshkosh).